Reading from the N-terminus, the 560-residue chain is MSSRGNRNIAISAGSLAVLLGALDTYVVITIIVDIMADVGIAINQIQQVTPIITGYLLGYIAAMPLLGRASDRFGRKMLIQVGLAGFAVGSVVTALSSDLTMLVIGRIIQGSASGALLPVTLALAADLWSARSRASVLGGVGAAQELGAVLGPMYGIALVWLFNHWQAVFWVNVPLAVIAMVMIHFSLPARQQVDEPERVDVIGGVLLAIALGLTVVGLYNPEPDGKQVLPSWGLPVLAGALVAAVAFFAWEKVAKTRLIDPAGVRFRPFLAALAASLCAGAALMVTLVNVELFGQGVLGQDQDHAAFLLLRFLIALPIGALIGGWLATRIGDRLVVLIGLLIAAGGFVLISHWSVDVLADRHNLGLFTLPVLDTDLAIVGLGLGLVIGPLTSATLRAVPAAEHGIASAAVVVARMIGMLIGIAALGAWGFYRFNQHLATLAARAAGDAGSPMSLAERLTAQAVRYREAYVMMYGDIFLSAAVVCVIGALLGLLISGKHEHAEEFEPAYAPTYGGGGAIDPYDAGDADDAPTEMLDLPTQVLSAPPSDPGDERPGRHRAP.

A run of 14 helical transmembrane segments spans residues 16 to 36 (LAVLLGALDTYVVITIIVDIM), 48 to 68 (QVTPIITGYLLGYIAAMPLLG), 78 to 98 (MLIQVGLAGFAVGSVVTALSS), 108 to 128 (IIQGSASGALLPVTLALAADL), 143 to 163 (AAQELGAVLGPMYGIALVWLF), 168 to 188 (AVFWVNVPLAVIAMVMIHFSL), 200 to 220 (VDVIGGVLLAIALGLTVVGLY), 229 to 249 (VLPSWGLPVLAGALVAAVAFF), 269 to 289 (PFLAALAASLCAGAALMVTLV), 307 to 327 (AFLLLRFLIALPIGALIGGWL), 336 to 356 (VVLIGLLIAAGGFVLISHWSV), 368 to 388 (FTLPVLDTDLAIVGLGLGLVI), 411 to 431 (VVVARMIGMLIGIAALGAWGF), and 477 to 497 (IFLSAAVVCVIGALLGLLISG). The tract at residues 362–371 (RHNLGLFTLP) is beta-hairpin. Positions 519-560 (IDPYDAGDADDAPTEMLDLPTQVLSAPPSDPGDERPGRHRAP) are disordered.

The protein belongs to the major facilitator superfamily. P55 (TC 2.A.1.3.34) family.

It localises to the cell inner membrane. With respect to regulation, resistance to ethidium bromide is inhibited by reserpine. In terms of biological role, in association with lipoprotein LprG transports triacyglycerides (TAG) across the inner cell membrane into the periplasm; TAG probably regulates lipid metabolism and growth regulation and plays a structural role in the outer membrane. TAG (and maybe other lipids) enters the central cavity of the P55 transporter from within the cell inner membrane via clefts on the cytoplasmic face of P55 between TM5-TM8 and TM2-TM11. From there the lipid is probably transferred to the hydrophobic cavity of LprG. Confers resistance to ethidium bromide, possibly acting as an efflux pump, requires LprG lipoprotein for normal function. Export of ethidium bromide can be complemented by the equivalent operon from M.tuberculosis (lprG-Rv1410c). Involved in drug susceptibilty, its expression alone partially complements the antibiotic susceptibilty of a double lprG-mfs deletion. Probably does not function as a bona fide drug efflux pump, but instead plays a role in outer membrane biogenesis. Probably required with LprG for normal surface localization of lipoarabinomannan (LAM). This is Triacylglyceride transporter MSMEG_3069/MSMEI_2992 from Mycolicibacterium smegmatis (strain ATCC 700084 / mc(2)155) (Mycobacterium smegmatis).